We begin with the raw amino-acid sequence, 1074 residues long: Carbamoyl phosphate synthase large chain (1074 aa).

The carboxyphosphate synthetic domain stretch occupies residues 1–399; that stretch reads MPKRSDIKKV…ALMKAIRSLD (399 aa). The ATP site is built by R129, R169, G175, G176, E208, V210, E215, G241, I242, H243, Q284, and E296. The region spanning 133-325 is the ATP-grasp 1 domain; sequence KKAMERIGEP…IARVTAKIAI (193 aa). Residues Q284, E296, and N298 each contribute to the Mg(2+) site. Mn(2+)-binding residues include Q284, E296, and N298. The oligomerization domain stretch occupies residues 400 to 543; it reads IDIDLGYNGK…YSTYDEECEL (144 aa). Positions 544–933 are carbamoyl phosphate synthetic domain; it reads NPSDNKKVLI…FKAEMSAENN (390 aa). The ATP-grasp 2 domain occupies 674–865; the sequence is NKLLNKLGIP…LAKIAAKVMA (192 aa). ATP is bound by residues R710, D749, L751, E756, G781, I782, H783, S784, Q824, and E836. Residues Q824, E836, and N838 each contribute to the Mg(2+) site. Q824, E836, and N838 together coordinate Mn(2+). An MGS-like domain is found at 932-1074; the sequence is NNLPLDGIVF…YHREVRYRAL (143 aa). The interval 934 to 1074 is allosteric domain; that stretch reads LPLDGIVFIS…YHREVRYRAL (141 aa).

The protein belongs to the CarB family. In terms of assembly, composed of two chains; the small (or glutamine) chain promotes the hydrolysis of glutamine to ammonia, which is used by the large (or ammonia) chain to synthesize carbamoyl phosphate. Tetramer of heterodimers (alpha,beta)4. Mg(2+) serves as cofactor. Mn(2+) is required as a cofactor.

The enzyme catalyses hydrogencarbonate + L-glutamine + 2 ATP + H2O = carbamoyl phosphate + L-glutamate + 2 ADP + phosphate + 2 H(+). It catalyses the reaction hydrogencarbonate + NH4(+) + 2 ATP = carbamoyl phosphate + 2 ADP + phosphate + 2 H(+). It participates in amino-acid biosynthesis; L-arginine biosynthesis; carbamoyl phosphate from bicarbonate: step 1/1. The protein operates within pyrimidine metabolism; UMP biosynthesis via de novo pathway; (S)-dihydroorotate from bicarbonate: step 1/3. In terms of biological role, large subunit of the glutamine-dependent carbamoyl phosphate synthetase (CPSase). CPSase catalyzes the formation of carbamoyl phosphate from the ammonia moiety of glutamine, carbonate, and phosphate donated by ATP, constituting the first step of 2 biosynthetic pathways, one leading to arginine and/or urea and the other to pyrimidine nucleotides. The large subunit (synthetase) binds the substrates ammonia (free or transferred from glutamine from the small subunit), hydrogencarbonate and ATP and carries out an ATP-coupled ligase reaction, activating hydrogencarbonate by forming carboxy phosphate which reacts with ammonia to form carbamoyl phosphate. This Methanothrix thermoacetophila (strain DSM 6194 / JCM 14653 / NBRC 101360 / PT) (Methanosaeta thermophila) protein is Carbamoyl phosphate synthase large chain.